The primary structure comprises 807 residues: Protein FAR1-RELATED SEQUENCE 2 (807 aa).

The region spanning 52–138 is the FAR1 domain; it reads YFYREYARSV…VKEHNHEICP (87 aa). The region spanning 219–315 is the MULE domain; sequence VVLFDTFYVR…CLWSVLSKIS (97 aa). The SWIM-type zinc finger occupies 499-535; the sequence is FFVALNNELLDACCSCHLFEYQGFLCKHAILVLQSAD. Positions 660–680 form a coiled coil; it reads EDATNRSEELRQETEQVSSRA. The span at 788–798 shows a compositional bias: polar residues; it reads GSSQFQGSDSS. The interval 788–807 is disordered; the sequence is GSSQFQGSDSSHPSDHRLSN.

It belongs to the FHY3/FAR1 family. Expressed in hypocotyls, rosette and cauline leaves, inflorescences stems, flowers and siliques.

It localises to the nucleus. Functionally, putative transcription activator involved in regulating light control of development. The protein is Protein FAR1-RELATED SEQUENCE 2 (FRS2) of Arabidopsis thaliana (Mouse-ear cress).